Here is a 715-residue protein sequence, read N- to C-terminus: Fatty acid oxidation complex subunit alpha (715 aa).

The interval 1-190 is enoyl-CoA hydratase/isomerase; the sequence is MIYEGKAITV…KVGAVDAVVA (190 aa). D297 contacts substrate. Positions 312-715 are 3-hydroxyacyl-CoA dehydrogenase; it reads RDVKQAAVLG…MAKNGQSFFG (404 aa). NAD(+)-binding positions include M325, D344, 401-403, K408, and S430; that span reads VVE. Residue H451 is the For 3-hydroxyacyl-CoA dehydrogenase activity of the active site. N454 provides a ligand contact to NAD(+). Substrate-binding residues include N501 and Y660.

It in the N-terminal section; belongs to the enoyl-CoA hydratase/isomerase family. The protein in the C-terminal section; belongs to the 3-hydroxyacyl-CoA dehydrogenase family. As to quaternary structure, heterotetramer of two alpha chains (FadB) and two beta chains (FadA).

It catalyses the reaction a (3S)-3-hydroxyacyl-CoA + NAD(+) = a 3-oxoacyl-CoA + NADH + H(+). The enzyme catalyses a (3S)-3-hydroxyacyl-CoA = a (2E)-enoyl-CoA + H2O. It carries out the reaction a 4-saturated-(3S)-3-hydroxyacyl-CoA = a (3E)-enoyl-CoA + H2O. The catalysed reaction is (3S)-3-hydroxybutanoyl-CoA = (3R)-3-hydroxybutanoyl-CoA. It catalyses the reaction a (3Z)-enoyl-CoA = a 4-saturated (2E)-enoyl-CoA. The enzyme catalyses a (3E)-enoyl-CoA = a 4-saturated (2E)-enoyl-CoA. The protein operates within lipid metabolism; fatty acid beta-oxidation. Involved in the aerobic and anaerobic degradation of long-chain fatty acids via beta-oxidation cycle. Catalyzes the formation of 3-oxoacyl-CoA from enoyl-CoA via L-3-hydroxyacyl-CoA. It can also use D-3-hydroxyacyl-CoA and cis-3-enoyl-CoA as substrate. This is Fatty acid oxidation complex subunit alpha from Pseudomonas fluorescens (strain SBW25).